Here is a 110-residue protein sequence, read N- to C-terminus: Small ribosomal subunit protein eS25 (110 aa).

Positions 1-37 (MGGASKKPISTMEKRLKKEAEKQQKAEEKKKGPSKTG) are disordered. Basic and acidic residues predominate over residues 12-37 (MEKRLKKEAEKQQKAEEKKKGPSKTG).

Belongs to the eukaryotic ribosomal protein eS25 family.

The polypeptide is Small ribosomal subunit protein eS25 (rps25e) (Saccharolobus solfataricus (strain ATCC 35092 / DSM 1617 / JCM 11322 / P2) (Sulfolobus solfataricus)).